Reading from the N-terminus, the 727-residue chain is DNA ligase (727 aa).

Residues 71-75 (DGEFD), 120-121 (SL), and Glu150 each bind NAD(+). Lys152 serves as the catalytic N6-AMP-lysine intermediate. The NAD(+) site is built by Arg173, Glu213, Lys329, and Lys353. Cys447, Cys450, Cys466, and Cys472 together coordinate Zn(2+). A BRCT domain is found at 636-725 (SIERHLTGLS…PEAAAEAALP (90 aa)).

The protein belongs to the NAD-dependent DNA ligase family. LigA subfamily. Mg(2+) is required as a cofactor. Requires Mn(2+) as cofactor.

The enzyme catalyses NAD(+) + (deoxyribonucleotide)n-3'-hydroxyl + 5'-phospho-(deoxyribonucleotide)m = (deoxyribonucleotide)n+m + AMP + beta-nicotinamide D-nucleotide.. In terms of biological role, DNA ligase that catalyzes the formation of phosphodiester linkages between 5'-phosphoryl and 3'-hydroxyl groups in double-stranded DNA using NAD as a coenzyme and as the energy source for the reaction. It is essential for DNA replication and repair of damaged DNA. This is DNA ligase from Saccharopolyspora erythraea (strain ATCC 11635 / DSM 40517 / JCM 4748 / NBRC 13426 / NCIMB 8594 / NRRL 2338).